The primary structure comprises 570 residues: Protein B602L (570 aa).

20 repeat units span residues 161–164 (CADT), 165–168 (NAST), 169–172 (SADT), 173–176 (NAST), 177–180 (CADT), 181–184 (NVDT), 185–188 (CAST), 189–192 (CADT), 193–196 (NVDT), 197–200 (CADT), 201–204 (CAST), 205–208 (CAST), 209–212 (CAST), 213–216 (CAST), 217–220 (CADT), 221–224 (NVDT), 225–228 (CADT), 229–232 (CVST), 233–236 (CAST), and 237–240 (CANT). A 20 X 4 AA tandem repeats of [CNS]-[ATV]-[DNS]-T region spans residues 161–240 (CADTNASTSA…STCASTCANT (80 aa)).

Belongs to the asfivirus B602L family.

It localises to the host cytoplasm. Plays an essential role in the assembly of the icosahedral capsid of the virus. Allows the assembly of 3 molecules of hexon protein p72 and formation of a thermostable trimer. The protein is Protein B602L of African swine fever virus (isolate Tick/South Africa/Pretoriuskop Pr4/1996) (ASFV).